We begin with the raw amino-acid sequence, 854 residues long: Probable inorganic carbon transporter subunit DabA (854 aa).

Residues cysteine 378, aspartate 380, histidine 560, and cysteine 575 each contribute to the Zn(2+) site.

Belongs to the inorganic carbon transporter (TC 9.A.2) DabA family. Forms a complex with DabB. Zn(2+) is required as a cofactor.

It localises to the cell membrane. Its function is as follows. Part of an energy-coupled inorganic carbon pump. This chain is Probable inorganic carbon transporter subunit DabA, found in Bacillus cereus (strain ATCC 14579 / DSM 31 / CCUG 7414 / JCM 2152 / NBRC 15305 / NCIMB 9373 / NCTC 2599 / NRRL B-3711).